Reading from the N-terminus, the 101-residue chain is Integration host factor subunit alpha (101 aa).

The protein belongs to the bacterial histone-like protein family. Heterodimer of an alpha and a beta chain.

In terms of biological role, this protein is one of the two subunits of integration host factor, a specific DNA-binding protein that functions in genetic recombination as well as in transcriptional and translational control. This is Integration host factor subunit alpha from Maricaulis maris (strain MCS10) (Caulobacter maris).